The sequence spans 140 residues: 3-hydroxyacyl-[acyl-carrier-protein] dehydratase FabZ (140 aa).

His-48 is an active-site residue.

It belongs to the thioester dehydratase family. FabZ subfamily.

It is found in the cytoplasm. The catalysed reaction is a (3R)-hydroxyacyl-[ACP] = a (2E)-enoyl-[ACP] + H2O. Functionally, involved in unsaturated fatty acids biosynthesis. Catalyzes the dehydration of short chain beta-hydroxyacyl-ACPs and long chain saturated and unsaturated beta-hydroxyacyl-ACPs. In Latilactobacillus sakei subsp. sakei (strain 23K) (Lactobacillus sakei subsp. sakei), this protein is 3-hydroxyacyl-[acyl-carrier-protein] dehydratase FabZ.